The primary structure comprises 197 residues: MFEYPQGYELIAGVDEVGRGPLVGAVVTAAVILDPNNPIEGLADSKKLSEKKRLALADEIKEKALAWALGRAEANEIDEINILQASLLAMTRAVKSLKIQPHFVLVDGNKIPKDLAIPAQAVVKGDSIVAEISAASILAKVARDQEMEELDKQYPEYAFAQHKGYPTKLHLEKLAEFGALPQHRRSFAPVKKALEQF.

The RNase H type-2 domain occupies 9 to 197 (ELIAGVDEVG…APVKKALEQF (189 aa)). A divalent metal cation is bound by residues D15, E16, and D107.

Belongs to the RNase HII family. Requires Mn(2+) as cofactor. It depends on Mg(2+) as a cofactor.

Its subcellular location is the cytoplasm. The enzyme catalyses Endonucleolytic cleavage to 5'-phosphomonoester.. Functionally, endonuclease that specifically degrades the RNA of RNA-DNA hybrids. This chain is Ribonuclease HII, found in Haemophilus influenzae (strain PittGG).